We begin with the raw amino-acid sequence, 241 residues long: ATP synthase subunit a (241 aa).

A run of 8 helical transmembrane segments spans residues 29–49 (NSSF…LFGI), 54–74 (VIPG…ISII), 86–106 (IPLI…GVLP), 114–134 (HVIV…IVGF), 153–173 (WLAP…PVSL), 177–197 (LAAN…FIVN), 200–220 (IFFT…EVFV), and 221–241 (AILQ…DAVK).

This sequence belongs to the ATPase A chain family. In terms of assembly, F-type ATPases have 2 components, CF(1) - the catalytic core - and CF(0) - the membrane proton channel. CF(1) has five subunits: alpha(3), beta(3), gamma(1), delta(1), epsilon(1). CF(0) has three main subunits: a(1), b(2) and c(9-12). The alpha and beta chains form an alternating ring which encloses part of the gamma chain. CF(1) is attached to CF(0) by a central stalk formed by the gamma and epsilon chains, while a peripheral stalk is formed by the delta and b chains.

The protein resides in the cell membrane. In terms of biological role, key component of the proton channel; it plays a direct role in the translocation of protons across the membrane. The sequence is that of ATP synthase subunit a from Wolbachia pipientis wMel.